A 1048-amino-acid chain; its full sequence is NACHT, LRR and PYD domains-containing protein 8 (1048 aa).

Residues 1-23 (MSDVNPPSDTPIPFSSSSTHSSH) are disordered. Residues 11-23 (PIPFSSSSTHSSH) are compositionally biased toward low complexity. A Pyrin domain is found at 33–131 (PGSPCENGVM…NAILPTLEPE (99 aa)). Residues 204 to 527 (KTVAIQGAPG…FYVLCFPQRL (324 aa)) form the NACHT domain. 210–217 (GAPGIGKT) provides a ligand contact to ATP. LRR repeat units lie at residues 815 to 838 (NGHL…YLSV), 839 to 861 (AQLE…SLAS), 866 to 890 (SKML…IWNA), 923 to 950 (NKTL…ALKN), and 980 to 1007 (NQHL…AFSS). The segment at 1029–1048 (PTPHPPDFTGKSDCLSQINP) is disordered.

It belongs to the NLRP family.

The protein localises to the cytoplasm. Functionally, involved in inflammation. The sequence is that of NACHT, LRR and PYD domains-containing protein 8 (NLRP8) from Homo sapiens (Human).